Here is a 485-residue protein sequence, read N- to C-terminus: Cysteine--tRNA ligase (485 aa).

Position 27 (cysteine 27) interacts with Zn(2+). A 'HIGH' region motif is present at residues 29-39 (ITAYDLCHIGH). 3 residues coordinate Zn(2+): cysteine 208, histidine 233, and glutamate 237. Residues 265–269 (KMSKS) carry the 'KMSKS' region motif. Position 268 (lysine 268) interacts with ATP.

It belongs to the class-I aminoacyl-tRNA synthetase family. As to quaternary structure, monomer. Requires Zn(2+) as cofactor.

The protein resides in the cytoplasm. The catalysed reaction is tRNA(Cys) + L-cysteine + ATP = L-cysteinyl-tRNA(Cys) + AMP + diphosphate. This Maridesulfovibrio salexigens (strain ATCC 14822 / DSM 2638 / NCIMB 8403 / VKM B-1763) (Desulfovibrio salexigens) protein is Cysteine--tRNA ligase.